The following is a 267-amino-acid chain: Tryptophan synthase alpha chain (267 aa).

Catalysis depends on proton acceptor residues Glu-49 and Asp-60.

Belongs to the TrpA family. In terms of assembly, tetramer of two alpha and two beta chains.

It catalyses the reaction (1S,2R)-1-C-(indol-3-yl)glycerol 3-phosphate + L-serine = D-glyceraldehyde 3-phosphate + L-tryptophan + H2O. It participates in amino-acid biosynthesis; L-tryptophan biosynthesis; L-tryptophan from chorismate: step 5/5. In terms of biological role, the alpha subunit is responsible for the aldol cleavage of indoleglycerol phosphate to indole and glyceraldehyde 3-phosphate. The sequence is that of Tryptophan synthase alpha chain from Pelobacter propionicus (strain DSM 2379 / NBRC 103807 / OttBd1).